The primary structure comprises 238 residues: MTDTAENQTPNDRQAGHPRSIRSFVLRQSHMTAAQQRAIDTLWDSFGIDYQATPVDLDANFGSNRPKILEIGFGMGTATAEIALRLPETDFLAIDVHGPGVGNLLKLINENHLENIRVMRHDAVEVVENMLQDGSLDGIHIFFPDPWHKKRHHKRRLIQAPFIAKLLPKLKTGGYIHLATDWEEYAQQMLEVLSSFDSLQNTATDYAPTPDYRPETKFEARGKRLGHGVWDLVFKRIR.

Residues Met-1–Asp-12 show a composition bias toward polar residues. Residues Met-1–Ser-20 are disordered. Residues Glu-70, Asp-95, Asp-122, and Asp-145 each contribute to the S-adenosyl-L-methionine site. The active site involves Asp-145. Residues Lys-149, Asp-181, and Thr-216–Glu-219 contribute to the substrate site.

It belongs to the class I-like SAM-binding methyltransferase superfamily. TrmB family.

The catalysed reaction is guanosine(46) in tRNA + S-adenosyl-L-methionine = N(7)-methylguanosine(46) in tRNA + S-adenosyl-L-homocysteine. It functions in the pathway tRNA modification; N(7)-methylguanine-tRNA biosynthesis. In terms of biological role, catalyzes the formation of N(7)-methylguanine at position 46 (m7G46) in tRNA. This Neisseria meningitidis serogroup C (strain 053442) protein is tRNA (guanine-N(7)-)-methyltransferase.